Consider the following 452-residue polypeptide: UPF0210 protein Hore_14430 (452 aa).

The protein belongs to the UPF0210 family. Homodimer.

This chain is UPF0210 protein Hore_14430, found in Halothermothrix orenii (strain H 168 / OCM 544 / DSM 9562).